The chain runs to 227 residues: Ribonuclease 3 (227 aa).

The RNase III domain maps to 4-126 (LDRLERKIGY…IIGAMSLDQG (123 aa)). E39 contacts Mg(2+). Residue D43 is part of the active site. Mg(2+) contacts are provided by D112 and E115. The active site involves E115. Residues 153 to 226 (DAKTRLQEYL…AEQILKELDI (74 aa)) enclose the DRBM domain.

The protein belongs to the ribonuclease III family. In terms of assembly, homodimer. It depends on Mg(2+) as a cofactor.

The protein localises to the cytoplasm. It carries out the reaction Endonucleolytic cleavage to 5'-phosphomonoester.. Digests double-stranded RNA. Involved in the processing of primary rRNA transcript to yield the immediate precursors to the large and small rRNAs (23S and 16S). Processes some mRNAs, and tRNAs when they are encoded in the rRNA operon. Processes pre-crRNA and tracrRNA of type II CRISPR loci if present in the organism. The protein is Ribonuclease 3 of Haemophilus influenzae (strain PittGG).